A 309-amino-acid polypeptide reads, in one-letter code: Homoserine kinase (309 aa).

91-101 (PIGSGLGSSAC) provides a ligand contact to ATP.

It belongs to the GHMP kinase family. Homoserine kinase subfamily.

It localises to the cytoplasm. The enzyme catalyses L-homoserine + ATP = O-phospho-L-homoserine + ADP + H(+). It participates in amino-acid biosynthesis; L-threonine biosynthesis; L-threonine from L-aspartate: step 4/5. Its function is as follows. Catalyzes the ATP-dependent phosphorylation of L-homoserine to L-homoserine phosphate. This is Homoserine kinase from Salmonella arizonae (strain ATCC BAA-731 / CDC346-86 / RSK2980).